We begin with the raw amino-acid sequence, 708 residues long: Serine/threonine-protein kinase Nek5 (708 aa).

One can recognise a Protein kinase domain in the interval 4–259 (YDVIKAIGQG…INSILKRPFL (256 aa)). ATP-binding positions include 10–18 (IGQGAFGKA) and Lys33. The Proton acceptor role is filled by Asp128. 2 disordered regions span residues 376 to 403 (SYHP…PSQW) and 423 to 454 (KQLG…FQEL). Basic and acidic residues predominate over residues 440 to 454 (QELRSNGEEPRFQEL).

It belongs to the protein kinase superfamily. NEK Ser/Thr protein kinase family. NIMA subfamily. Mg(2+) serves as cofactor.

Its subcellular location is the cell projection. It localises to the cilium. The protein resides in the flagellum. The enzyme catalyses L-seryl-[protein] + ATP = O-phospho-L-seryl-[protein] + ADP + H(+). It carries out the reaction L-threonyl-[protein] + ATP = O-phospho-L-threonyl-[protein] + ADP + H(+). The polypeptide is Serine/threonine-protein kinase Nek5 (NEK5) (Homo sapiens (Human)).